A 280-amino-acid chain; its full sequence is Ribosomal RNA small subunit methyltransferase I (280 aa).

It belongs to the methyltransferase superfamily. RsmI family.

The protein resides in the cytoplasm. It carries out the reaction cytidine(1402) in 16S rRNA + S-adenosyl-L-methionine = 2'-O-methylcytidine(1402) in 16S rRNA + S-adenosyl-L-homocysteine + H(+). Functionally, catalyzes the 2'-O-methylation of the ribose of cytidine 1402 (C1402) in 16S rRNA. This is Ribosomal RNA small subunit methyltransferase I from Rickettsia prowazekii (strain Madrid E).